The following is a 198-amino-acid chain: Synaptobrevin homolog YKT6-B (198 aa).

One can recognise a Longin domain in the interval 8–127; the sequence is VLYKGENKVH…IQYNALDSYL (120 aa). Positions 138–198 constitute a v-SNARE coiled-coil homology domain; that stretch reads PMSKVQAELD…RKQNSCCDIM (61 aa). Cysteine 194 carries S-palmitoyl cysteine lipidation. Residue cysteine 195 is modified to Cysteine methyl ester. Cysteine 195 carries the S-farnesyl cysteine lipid modification. Residues 196-198 constitute a propeptide, removed in mature form; that stretch reads DIM.

The protein belongs to the synaptobrevin family. Palmitoylated; catalyzes its own palmitoylation. Palmitoylation is required for Golgi targeting. In terms of processing, farnesylation is required for Golgi targeting.

The protein resides in the cytoplasm. It is found in the cytosol. Its subcellular location is the cytoplasmic vesicle membrane. It localises to the golgi apparatus membrane. Vesicular soluble NSF attachment protein receptor (v-SNARE) mediating vesicle docking and fusion to a specific acceptor cellular compartment. Functions in endoplasmic reticulum to Golgi transport; as part of a SNARE complex composed of GOSR1, GOSR2 and STX5. Functions in early/recycling endosome to TGN transport; as part of a SNARE complex composed of BET1L, GOSR1 and STX5. Has a S-palmitoyl transferase activity. The polypeptide is Synaptobrevin homolog YKT6-B (ykt6-b) (Xenopus laevis (African clawed frog)).